A 458-amino-acid polypeptide reads, in one-letter code: Probable Xaa-Pro aminopeptidase pepP (458 aa).

The Mn(2+) site is built by aspartate 254, aspartate 265, glutamate 388, and glutamate 428.

The protein belongs to the peptidase M24B family. Mn(2+) is required as a cofactor.

The enzyme catalyses Release of any N-terminal amino acid, including proline, that is linked to proline, even from a dipeptide or tripeptide.. Its function is as follows. Catalyzes the removal of a penultimate prolyl residue from the N-termini of peptides. The chain is Probable Xaa-Pro aminopeptidase pepP (pepP) from Botryotinia fuckeliana (strain B05.10) (Noble rot fungus).